Consider the following 316-residue polypeptide: 4-hydroxy-3-methylbut-2-enyl diphosphate reductase (316 aa).

Cys-17 serves as a coordination point for [4Fe-4S] cluster. Residues His-46 and His-79 each coordinate (2E)-4-hydroxy-3-methylbut-2-enyl diphosphate. 2 residues coordinate dimethylallyl diphosphate: His-46 and His-79. Positions 46 and 79 each coordinate isopentenyl diphosphate. Cys-101 provides a ligand contact to [4Fe-4S] cluster. Residue His-129 coordinates (2E)-4-hydroxy-3-methylbut-2-enyl diphosphate. Residue His-129 participates in dimethylallyl diphosphate binding. His-129 contacts isopentenyl diphosphate. The Proton donor role is filled by Glu-131. Thr-170 lines the (2E)-4-hydroxy-3-methylbut-2-enyl diphosphate pocket. Cys-200 is a [4Fe-4S] cluster binding site. Residues Ser-228, Ser-229, Asn-230, and Ser-273 each contribute to the (2E)-4-hydroxy-3-methylbut-2-enyl diphosphate site. Residues Ser-228, Ser-229, Asn-230, and Ser-273 each contribute to the dimethylallyl diphosphate site. Isopentenyl diphosphate is bound by residues Ser-228, Ser-229, Asn-230, and Ser-273.

The protein belongs to the IspH family. Requires [4Fe-4S] cluster as cofactor.

The enzyme catalyses isopentenyl diphosphate + 2 oxidized [2Fe-2S]-[ferredoxin] + H2O = (2E)-4-hydroxy-3-methylbut-2-enyl diphosphate + 2 reduced [2Fe-2S]-[ferredoxin] + 2 H(+). The catalysed reaction is dimethylallyl diphosphate + 2 oxidized [2Fe-2S]-[ferredoxin] + H2O = (2E)-4-hydroxy-3-methylbut-2-enyl diphosphate + 2 reduced [2Fe-2S]-[ferredoxin] + 2 H(+). It functions in the pathway isoprenoid biosynthesis; dimethylallyl diphosphate biosynthesis; dimethylallyl diphosphate from (2E)-4-hydroxy-3-methylbutenyl diphosphate: step 1/1. It participates in isoprenoid biosynthesis; isopentenyl diphosphate biosynthesis via DXP pathway; isopentenyl diphosphate from 1-deoxy-D-xylulose 5-phosphate: step 6/6. Functionally, catalyzes the conversion of 1-hydroxy-2-methyl-2-(E)-butenyl 4-diphosphate (HMBPP) into a mixture of isopentenyl diphosphate (IPP) and dimethylallyl diphosphate (DMAPP). Acts in the terminal step of the DOXP/MEP pathway for isoprenoid precursor biosynthesis. This is 4-hydroxy-3-methylbut-2-enyl diphosphate reductase from Ruegeria pomeroyi (strain ATCC 700808 / DSM 15171 / DSS-3) (Silicibacter pomeroyi).